The chain runs to 122 residues: Large ribosomal subunit protein bL12 (122 aa).

This sequence belongs to the bacterial ribosomal protein bL12 family. In terms of assembly, homodimer. Part of the ribosomal stalk of the 50S ribosomal subunit. Forms a multimeric L10(L12)X complex, where L10 forms an elongated spine to which 2 to 4 L12 dimers bind in a sequential fashion. Binds GTP-bound translation factors.

Its function is as follows. Forms part of the ribosomal stalk which helps the ribosome interact with GTP-bound translation factors. Is thus essential for accurate translation. This is Large ribosomal subunit protein bL12 from Buchnera aphidicola subsp. Acyrthosiphon pisum (strain Tuc7).